The following is a 215-amino-acid chain: MYGKSSTRAVLLLLGIQLTALWPIAAVEIYTSRVLEAVNGTDARLKCTFSSFAPVGDALTVTWNFRPLDGGPEQFVFYYHIDPFQPMSGRFKDRVSWDGNPERYDASILLWKLQFDDNGTYTCQVKNPPDVDGVIGEIRLSVVHTVRFSEIHFLALAIGSACALMIIIVIVVVLFQHYRKKRWAERAHKVVEIKSKEEERLNQEKKVSVYLEDTD.

The first 26 residues, 1-26, serve as a signal peptide directing secretion; it reads MYGKSSTRAVLLLLGIQLTALWPIAA. An Ig-like V-type domain is found at 27 to 141; sequence VEIYTSRVLE…DGVIGEIRLS (115 aa). Residues 27–154 lie on the Extracellular side of the membrane; it reads VEIYTSRVLE…TVRFSEIHFL (128 aa). 2 N-linked (GlcNAc...) asparagine glycosylation sites follow: Asn39 and Asn118. The cysteines at positions 47 and 123 are disulfide-linked. The chain crosses the membrane as a helical span at residues 155 to 175; that stretch reads ALAIGSACALMIIIVIVVVLF. At 176 to 215 the chain is on the cytoplasmic side; the sequence is QHYRKKRWAERAHKVVEIKSKEEERLNQEKKVSVYLEDTD.

The protein belongs to the myelin P0 protein family. Widely expressed. In fetal tissues, highest expression in the inner ear. In adult tissues, highest levels in thymus and lung.

It is found in the membrane. In terms of biological role, mediates homophilic cell-cell adhesion. This chain is Myelin protein zero-like protein 2 (MPZL2), found in Homo sapiens (Human).